The chain runs to 337 residues: Geranylgeranyl pyrophosphate synthase subD (337 aa).

Isopentenyl diphosphate is bound by residues K53, R56, and H85. D92 and D96 together coordinate Mg(2+). Residue R101 coordinates dimethylallyl diphosphate. Residue R102 coordinates isopentenyl diphosphate. Dimethylallyl diphosphate-binding residues include K179, T180, and Q219. D222 contacts Mg(2+). 3 residues coordinate dimethylallyl diphosphate: N226, K236, and K246.

The protein belongs to the FPP/GGPP synthase family. Requires Mg(2+) as cofactor.

It catalyses the reaction isopentenyl diphosphate + dimethylallyl diphosphate = (2E)-geranyl diphosphate + diphosphate. It carries out the reaction isopentenyl diphosphate + (2E)-geranyl diphosphate = (2E,6E)-farnesyl diphosphate + diphosphate. The catalysed reaction is isopentenyl diphosphate + (2E,6E)-farnesyl diphosphate = (2E,6E,10E)-geranylgeranyl diphosphate + diphosphate. Its pathway is secondary metabolite biosynthesis; terpenoid biosynthesis. Functionally, geranylgeranyl pyrophosphate synthase; part of the gene cluster that mediates the biosynthesis of the immunosuppressants subglutinols, meroterpenoids consisting of an alpha-pyrone (4-hydroxy-5,6-dimethyl-2-pyrone) moiety attached to a decalin core fused to a five-membered cyclic ether carrying a prenylside chain. The first step of the pathway is the synthesis of the alpha-pyrone moiety by the polyketide synthase subA via condensation of one acetyl-CoA starter unit with 3 malonyl-CoA units and 2 methylations. The alpha-pyrone is then combined with geranylgeranyl pyrophosphate (GGPP) formed by the GGPP synthase subD through the action of the prenyltransferase subC to yield a linear alpha-pyrone diterpenoid. Subsequent steps in the subglutinol biosynthetic pathway involve the decalin core formation, which is thought to be initiated by the epoxidation of the C10-C11 olefin by the FAD-dependent oxidoreductase subE. The following cyclization cascade would be catalyzed by the terpene cyclase subB. Lastly, the FAD-dependent dehydrogenase subF probably catalyzes the five-membered cyclic ether formation to complete the formation of subglutinol A. Subsequent redox reactions appear to give rise to subglutinol C and D, however, it remains unclear which enzymes are responsible for these transformations. SubD may have secondary function in the conversion of the identified subglutinols to subglutinol analog 45, which seems to be the major product of the cluster. In Metarhizium robertsii (strain ARSEF 23 / ATCC MYA-3075) (Metarhizium anisopliae (strain ARSEF 23)), this protein is Geranylgeranyl pyrophosphate synthase subD.